Consider the following 309-residue polypeptide: uncharacterized protein (309 aa).

Positions 1-16 (MAGNSRRRGAVRKAGT) are enriched in basic residues. The tract at residues 1-70 (MAGNSRRRGA…AKRTEETETV (70 aa)) is disordered. S-adenosyl-L-methionine is bound by residues Gly261, Ile281, and Leu290.

The protein belongs to the class IV-like SAM-binding methyltransferase superfamily. RNA methyltransferase TrmH family.

This is an uncharacterized protein from Mycobacterium avium (strain 104).